A 317-amino-acid chain; its full sequence is Olfactory receptor 8B3 (317 aa).

Over 1–32 (MISMLAGNGSSVTEFVLAGLTDRPELQLPLFY) the chain is Extracellular. Asn-8 carries an N-linked (GlcNAc...) asparagine glycan. The chain crosses the membrane as a helical span at residues 33–53 (LFLIIYIITVVGNLGLIILIG). The Cytoplasmic portion of the chain corresponds to 54 to 59 (LNPHLH). A helical membrane pass occupies residues 60 to 80 (TPMYYFLFNLSFIDLCYSSVF). Over 81 to 97 (SPKMLINFVSEKNSISY) the chain is Extracellular. The helical transmembrane segment at 98 to 118 (AGCMTQLFLFLFFVISECYML) threads the bilayer. Topologically, residues 119–136 (TSMAYDRYVAICNPLLYK) are cytoplasmic. A helical transmembrane segment spans residues 137-157 (VTMSPQICSVISFAAYGMGFA). Topologically, residues 158-199 (GSSAHTGCMLRLTFCNVNVINHYLCDILPLLQLSCTSTYVNE) are extracellular. A helical transmembrane segment spans residues 200–220 (VVVLIVVGINITVPSFTILIS). Residues 221–242 (YVFILANILNIKSTQGRAKAFS) lie on the Cytoplasmic side of the membrane. A helical membrane pass occupies residues 243–263 (TCSSHIMAISLFFGSAAFMYL). The Extracellular segment spans residues 264 to 274 (KYSSGSMEQGK). Residues 275 to 294 (ISSVFYTNVGPMLNPLIYSL) traverse the membrane as a helical segment. The Cytoplasmic segment spans residues 295-317 (RNKDVKVALRKSLIKFREKTDFN).

This sequence belongs to the G-protein coupled receptor 1 family.

It localises to the cell membrane. Its function is as follows. Odorant receptor. The polypeptide is Olfactory receptor 8B3 (Mus musculus (Mouse)).